A 262-amino-acid polypeptide reads, in one-letter code: MNFSGSPVQLPLLQVHLPGEVPYRTAWAWQQARLAHMIRDPQLPDGLLLLTHPAVYTLGAGADPKFLKSLSQPIGSPAIHPESPSEQEPEILRVERGGEVTYHGPGQWVGYAMLNLKRHRPDLHEYLRQLEEVVIQTLAHFGLQGERIPGLTGVWVQGRKVAAIGIKVSRWVTYHGFALNVCPDLAAFEAIVPCGIPDRPVGSLVHFCPEVTMAAVAPVLVESFCQVFGLQAQAVSLAEWLGEPRLSDKLLGESTAQTPKRK.

Residues Pro-41–Ala-232 enclose the BPL/LPL catalytic domain. Residues Arg-96–His-103, Ala-163–Gly-165, and Gly-176–Ala-178 contribute to the substrate site. Catalysis depends on Cys-194, which acts as the Acyl-thioester intermediate.

It belongs to the LipB family.

It localises to the cytoplasm. The catalysed reaction is octanoyl-[ACP] + L-lysyl-[protein] = N(6)-octanoyl-L-lysyl-[protein] + holo-[ACP] + H(+). Its pathway is protein modification; protein lipoylation via endogenous pathway; protein N(6)-(lipoyl)lysine from octanoyl-[acyl-carrier-protein]: step 1/2. Functionally, catalyzes the transfer of endogenously produced octanoic acid from octanoyl-acyl-carrier-protein onto the lipoyl domains of lipoate-dependent enzymes. Lipoyl-ACP can also act as a substrate although octanoyl-ACP is likely to be the physiological substrate. The sequence is that of Octanoyltransferase from Synechococcus sp. (strain JA-2-3B'a(2-13)) (Cyanobacteria bacterium Yellowstone B-Prime).